The chain runs to 105 residues: Small ribosomal subunit protein bS20 (105 aa).

Belongs to the bacterial ribosomal protein bS20 family.

In terms of biological role, binds directly to 16S ribosomal RNA. This is Small ribosomal subunit protein bS20 from Caldanaerobacter subterraneus subsp. tengcongensis (strain DSM 15242 / JCM 11007 / NBRC 100824 / MB4) (Thermoanaerobacter tengcongensis).